A 200-amino-acid chain; its full sequence is NADH-quinone oxidoreductase subunit C (200 aa).

This sequence belongs to the complex I 30 kDa subunit family. NDH-1 is composed of 14 different subunits. Subunits NuoB, C, D, E, F, and G constitute the peripheral sector of the complex.

It is found in the cell inner membrane. The enzyme catalyses a quinone + NADH + 5 H(+)(in) = a quinol + NAD(+) + 4 H(+)(out). Functionally, NDH-1 shuttles electrons from NADH, via FMN and iron-sulfur (Fe-S) centers, to quinones in the respiratory chain. The immediate electron acceptor for the enzyme in this species is believed to be ubiquinone. Couples the redox reaction to proton translocation (for every two electrons transferred, four hydrogen ions are translocated across the cytoplasmic membrane), and thus conserves the redox energy in a proton gradient. The polypeptide is NADH-quinone oxidoreductase subunit C (Paraburkholderia xenovorans (strain LB400)).